The chain runs to 298 residues: Protein ABIL1 (298 aa).

This sequence belongs to the ABI family. As to quaternary structure, binds SCAR2. As to expression, expressed in seedlings, roots, hypocotyls, cotyledons, leaves, stems, and flowers.

It is found in the cytoplasm. The protein resides in the cytoskeleton. Its function is as follows. Involved in regulation of actin and microtubule organization. Part of a WAVE complex that activates the Arp2/3 complex. This is Protein ABIL1 (ABIL1) from Arabidopsis thaliana (Mouse-ear cress).